Consider the following 350-residue polypeptide: Holliday junction branch migration complex subunit RuvB (350 aa).

The large ATPase domain (RuvB-L) stretch occupies residues 1-184; it reads MSKTPERLVT…FGIPIRLEFY (184 aa). Residues Leu23, Arg24, Gly65, Lys68, Thr69, Thr70, 131 to 133, Arg174, Tyr184, and Arg221 contribute to the ATP site; that span reads EDF. Residue Thr69 coordinates Mg(2+). A small ATPAse domain (RuvB-S) region spans residues 185–255; it reads TIEELERIVL…LADKALSLLD (71 aa). A head domain (RuvB-H) region spans residues 258 to 350; the sequence is PIGLDQMDRR…GLFPDQSEED (93 aa). DNA is bound by residues Arg294, Arg313, and Arg318.

This sequence belongs to the RuvB family. In terms of assembly, homohexamer. Forms an RuvA(8)-RuvB(12)-Holliday junction (HJ) complex. HJ DNA is sandwiched between 2 RuvA tetramers; dsDNA enters through RuvA and exits via RuvB. An RuvB hexamer assembles on each DNA strand where it exits the tetramer. Each RuvB hexamer is contacted by two RuvA subunits (via domain III) on 2 adjacent RuvB subunits; this complex drives branch migration. In the full resolvosome a probable DNA-RuvA(4)-RuvB(12)-RuvC(2) complex forms which resolves the HJ.

Its subcellular location is the cytoplasm. The catalysed reaction is ATP + H2O = ADP + phosphate + H(+). Functionally, the RuvA-RuvB-RuvC complex processes Holliday junction (HJ) DNA during genetic recombination and DNA repair, while the RuvA-RuvB complex plays an important role in the rescue of blocked DNA replication forks via replication fork reversal (RFR). RuvA specifically binds to HJ cruciform DNA, conferring on it an open structure. The RuvB hexamer acts as an ATP-dependent pump, pulling dsDNA into and through the RuvAB complex. RuvB forms 2 homohexamers on either side of HJ DNA bound by 1 or 2 RuvA tetramers; 4 subunits per hexamer contact DNA at a time. Coordinated motions by a converter formed by DNA-disengaged RuvB subunits stimulates ATP hydrolysis and nucleotide exchange. Immobilization of the converter enables RuvB to convert the ATP-contained energy into a lever motion, pulling 2 nucleotides of DNA out of the RuvA tetramer per ATP hydrolyzed, thus driving DNA branch migration. The RuvB motors rotate together with the DNA substrate, which together with the progressing nucleotide cycle form the mechanistic basis for DNA recombination by continuous HJ branch migration. Branch migration allows RuvC to scan DNA until it finds its consensus sequence, where it cleaves and resolves cruciform DNA. The polypeptide is Holliday junction branch migration complex subunit RuvB (Beijerinckia indica subsp. indica (strain ATCC 9039 / DSM 1715 / NCIMB 8712)).